The following is a 474-amino-acid chain: Shufflon protein A (474 aa).

A constant region region spans residues methionine 1–glycine 361. A variable region region spans residues threonine 362–threonine 474.

The sequence is that of Shufflon protein A from Escherichia coli.